A 217-amino-acid polypeptide reads, in one-letter code: Homologous-pairing protein 2 homolog (217 aa).

Positions 84–152 (ADLHGLDASI…RLKNIKAATN (69 aa)) form a coiled coil. The segment at 118 to 182 (TSALTTPEMQ…WRKRKRMTTE (65 aa)) is DNA-binding.

It belongs to the HOP2 family. Interacts with the DNA-binding domain of the nuclear receptors NR3C1/GR, ESR2/ER-beta, THRB and RXRA. Forms a stable heterodimer with MND1. Interacts with PSMC3/TBP1. Post-translationally, phosphorylated by PKA, PKC and MAPK. In terms of tissue distribution, highly expressed in testis and more specifically in spermatocytes. Detected in spleen, ovary and thymus.

The protein resides in the nucleus. In terms of biological role, plays an important role in meiotic recombination. Stimulates DMC1-mediated strand exchange required for pairing homologous chromosomes during meiosis. The complex PSMC3IP/MND1 binds DNA, stimulates the recombinase activity of DMC1 as well as DMC1 D-loop formation from double-strand DNA. This complex stabilizes presynaptic RAD51 and DMC1 filaments formed on single strand DNA to capture double-strand DNA. This complex stimulates both synaptic and presynaptic critical steps in RAD51 and DMC1-promoted homologous pairing. May inhibit HIV-1 viral protein TAT activity and modulate the activity of proteasomes through association with PSMC3. This chain is Homologous-pairing protein 2 homolog (Psmc3ip), found in Mus musculus (Mouse).